Reading from the N-terminus, the 77-residue chain is Translation initiation factor IF-1, chloroplastic (77 aa).

Residues 1–71 form the S1-like domain; sequence MKEQKLIHEG…TRGRIIYRLR (71 aa).

Belongs to the IF-1 family. Component of the 30S ribosomal translation pre-initiation complex which assembles on the 30S ribosome in the order IF-2 and IF-3, IF-1 and N-formylmethionyl-tRNA(fMet); mRNA recruitment can occur at any time during PIC assembly.

It localises to the plastid. The protein localises to the chloroplast. Its function is as follows. One of the essential components for the initiation of protein synthesis. Stabilizes the binding of IF-2 and IF-3 on the 30S subunit to which N-formylmethionyl-tRNA(fMet) subsequently binds. Helps modulate mRNA selection, yielding the 30S pre-initiation complex (PIC). Upon addition of the 50S ribosomal subunit IF-1, IF-2 and IF-3 are released leaving the mature 70S translation initiation complex. This is Translation initiation factor IF-1, chloroplastic from Ceratophyllum demersum (Rigid hornwort).